The chain runs to 82 residues: EMBRYO SURROUNDING FACTOR 1.2 (82 aa).

Residues 1-23 (MKSQTVLISIFIFSFFALHQCMQ) form the signal peptide. Intrachain disulfides connect cysteine 40–cysteine 56, cysteine 45–cysteine 77, cysteine 54–cysteine 71, and cysteine 57–cysteine 64.

It belongs to the MEG family. In terms of tissue distribution, expressed exclusively in ovule embryo sacs and in early developing endosperms.

In terms of biological role, maternally-contributed central cell peptide regulating suspensor development and correct auxin distribution in early developing embryos. The protein is EMBRYO SURROUNDING FACTOR 1.2 (ESF1.2) of Arabidopsis thaliana (Mouse-ear cress).